Here is a 310-residue protein sequence, read N- to C-terminus: Ribosomal protein uL3 glutamine methyltransferase (310 aa).

This sequence belongs to the protein N5-glutamine methyltransferase family. PrmB subfamily.

It catalyses the reaction L-glutaminyl-[ribosomal protein uL3] + S-adenosyl-L-methionine = N(5)-methyl-L-glutaminyl-[ribosomal protein uL3] + S-adenosyl-L-homocysteine + H(+). Methylates large ribosomal subunit protein uL3 on a specific glutamine residue. This chain is Ribosomal protein uL3 glutamine methyltransferase, found in Yersinia pestis.